We begin with the raw amino-acid sequence, 352 residues long: tRNA uridine(34) hydroxylase (352 aa).

A Rhodanese domain is found at 144 to 238 (SDPDVILIDT…YLEEVPASDS (95 aa)). Cys198 functions as the Cysteine persulfide intermediate in the catalytic mechanism.

It belongs to the TrhO family.

The enzyme catalyses uridine(34) in tRNA + AH2 + O2 = 5-hydroxyuridine(34) in tRNA + A + H2O. Its function is as follows. Catalyzes oxygen-dependent 5-hydroxyuridine (ho5U) modification at position 34 in tRNAs. The protein is tRNA uridine(34) hydroxylase of Psychrobacter cryohalolentis (strain ATCC BAA-1226 / DSM 17306 / VKM B-2378 / K5).